A 315-amino-acid chain; its full sequence is Aspartate carbamoyltransferase catalytic subunit (315 aa).

Residues Arg64 and Thr65 each coordinate carbamoyl phosphate. Residue Lys92 participates in L-aspartate binding. Arg114, His142, and Gln145 together coordinate carbamoyl phosphate. 2 residues coordinate L-aspartate: Arg175 and Arg229. Residues Gly270 and Pro271 each coordinate carbamoyl phosphate.

This sequence belongs to the aspartate/ornithine carbamoyltransferase superfamily. ATCase family. As to quaternary structure, heterododecamer (2C3:3R2) of six catalytic PyrB chains organized as two trimers (C3), and six regulatory PyrI chains organized as three dimers (R2).

The catalysed reaction is carbamoyl phosphate + L-aspartate = N-carbamoyl-L-aspartate + phosphate + H(+). It functions in the pathway pyrimidine metabolism; UMP biosynthesis via de novo pathway; (S)-dihydroorotate from bicarbonate: step 2/3. Its function is as follows. Catalyzes the condensation of carbamoyl phosphate and aspartate to form carbamoyl aspartate and inorganic phosphate, the committed step in the de novo pyrimidine nucleotide biosynthesis pathway. The chain is Aspartate carbamoyltransferase catalytic subunit from Bradyrhizobium diazoefficiens (strain JCM 10833 / BCRC 13528 / IAM 13628 / NBRC 14792 / USDA 110).